The primary structure comprises 214 residues: Adenylate kinase (214 aa).

14 to 19 (GSGKGT) contributes to the ATP binding site. Residues 32–61 (SVGKVLRTVMESNTAEADVVKKFIKSGKLV) form an NMP region. AMP-binding positions include arginine 38, 59–61 (KLV), 87–90 (GYPR), and glutamine 94. The segment at 124–162 (GRISCTDCGTIYNKLYCMPKINGVCDICNSSSFQNRVDD) is LID. Arginine 125 contacts ATP. Positions 128 and 131 each coordinate Zn(2+). ATP is bound at residue 134–135 (IY). Zn(2+)-binding residues include cysteine 148 and cysteine 151. AMP is bound by residues arginine 159 and arginine 170. Glutamine 198 serves as a coordination point for ATP.

The protein belongs to the adenylate kinase family. In terms of assembly, monomer.

Its subcellular location is the cytoplasm. The catalysed reaction is AMP + ATP = 2 ADP. Its pathway is purine metabolism; AMP biosynthesis via salvage pathway; AMP from ADP: step 1/1. Catalyzes the reversible transfer of the terminal phosphate group between ATP and AMP. Plays an important role in cellular energy homeostasis and in adenine nucleotide metabolism. In Orientia tsutsugamushi (strain Ikeda) (Rickettsia tsutsugamushi), this protein is Adenylate kinase.